The primary structure comprises 270 residues: BPI fold-containing family A member 1 (270 aa).

Positions Met-1 to Ala-19 are cleaved as a signal peptide. The important for surfactant activity and antibacterial properties stretch occupies residues Leu-104 to Leu-109. Asn-174 carries N-linked (GlcNAc...) asparagine glycosylation. Residues Cys-196 and Cys-238 are joined by a disulfide bond.

This sequence belongs to the BPI/LBP/Plunc superfamily. Plunc family. As to quaternary structure, monomer. Interacts (via N-terminus) with SCNN1B, a subunit of the heterotrimeric epithelial sodium channel (ENaC); this inhibits proteolytic activation of ENaC. Detected in adult nasal epithelium, heart, lung, spleen, testis and salivary gland, and in embryonic nasal epithelium, lung, salivary gland and thymus.

The protein resides in the secreted. Lipid-binding protein which shows high specificity for the surfactant phospholipid dipalmitoylphosphatidylcholine (DPPC). Plays a role in the innate immune responses of the upper airways. Reduces the surface tension in secretions from airway epithelia and inhibits the formation of biofilm by pathogenic Gram-negative bacteria, such as P.aeruginosa and K.pneumoniae. Negatively regulates proteolytic cleavage of SCNN1G, an event that is required for activation of the epithelial sodium channel (ENaC), and thereby contributes to airway surface liquid homeostasis and proper clearance of mucus. Plays a role in the airway inflammatory response after exposure to irritants. May attract macrophages and neutrophils. The protein is BPI fold-containing family A member 1 (Bpifa1) of Rattus norvegicus (Rat).